The following is a 1755-amino-acid chain: E3 ubiquitin-protein ligase UBR2 (1755 aa).

An N-acetylalanine modification is found at A2. K94 participates in a covalent cross-link: Glycyl lysine isopeptide (Lys-Gly) (interchain with G-Cter in ubiquitin). The UBR-type zinc finger occupies 97–168; that stretch reads HLCGRVFKVG…EGPYCQKHKL (72 aa). C99, C112, C115, C124, C127, H133, and H136 together coordinate Zn(2+). F148 lines the a peptide pocket. Residue C149 participates in Zn(2+) binding. A peptide is bound at residue D150. Zn(2+) is bound at residue C151. D153 is a binding site for a peptide. A Glycyl lysine isopeptide (Lys-Gly) (interchain with G-Cter in ubiquitin) cross-link involves residue K158. Zn(2+) is bound at residue C163. Residue K165 forms a Glycyl lysine isopeptide (Lys-Gly) (interchain with G-Cter in ubiquitin) linkage. Residue H166 participates in Zn(2+) binding. Residues K248, K255, and K470 each participate in a glycyl lysine isopeptide (Lys-Gly) (interchain with G-Cter in ubiquitin) cross-link. A Phosphoserine modification is found at S476. Glycyl lysine isopeptide (Lys-Gly) (interchain with G-Cter in ubiquitin) cross-links involve residues K488, K568, K779, and K789. The disordered stretch occupies residues 1012 to 1033; the sequence is AEAEGTIMEESSRDKDKAERKR. The stretch at 1019–1054 forms a coiled coil; sequence MEESSRDKDKAERKRKAEIARLRREKIMAQMSEMQR. Residues 1021 to 1033 are compositionally biased toward basic and acidic residues; sequence ESSRDKDKAERKR. Residues C1108, C1111, C1168, H1170, H1173, C1176, C1210, and C1213 each coordinate Zn(2+). The RING-type; atypical zinc finger occupies 1108 to 1214; it reads CILCQEEQEV…NGEFLCPLCE (107 aa). Residues K1496, K1599, and K1689 each participate in a glycyl lysine isopeptide (Lys-Gly) (interchain with G-Cter in ubiquitin) cross-link. A Phosphoserine modification is found at S1694. Phosphotyrosine is present on Y1697.

This sequence belongs to the E3 ubiquitin-protein ligase UBR1-like family. In terms of assembly, interacts with UBE2B; promotes the UBE2B-H2A interaction and the ubiquitination of histone H2A by UBE2B and UBR2. Interacts with RECQL4. Interacts with Tex19.1 and Tex19.2; does not lead to Tex19.1 degradation and stabilizes it. Interacts with L1RE1. Interacts with CASP8. Interacts with ATXN3. Interacts with UBE2O. Dephosphorylated by DUSP22 at Ser-1694 and Tyr-1697, leading to subsequent ubiquitination and proteasomal degradation. In terms of processing, 'Lys-48'-linked ubiquitinated at Lys-94, Lys-779 and Lys-1599 following DUSP22-mediated dephosphorylation of Ser-1694 and Tyr-1697 which promotes UBR2 interaction with the SCF(FBW1A) E3 ubiquitin-protein ligase complex. As to expression, highly expressed in skeletal muscle. Also expressed in heart, kidney and testis. Expressed in acinar cells of the pancreas. In testes, expressed primarily in spermatocytes. Expressed in cerebellum.

The protein localises to the nucleus. It localises to the chromosome. The enzyme catalyses S-ubiquitinyl-[E2 ubiquitin-conjugating enzyme]-L-cysteine + [acceptor protein]-L-lysine = [E2 ubiquitin-conjugating enzyme]-L-cysteine + N(6)-ubiquitinyl-[acceptor protein]-L-lysine.. The protein operates within protein modification; protein ubiquitination. Functionally, E3 ubiquitin-protein ligase which is a component of the N-end rule pathway. Recognizes and binds to proteins bearing specific N-terminal residues (N-degrons) that are destabilizing according to the N-end rule, leading to their ubiquitination and subsequent degradation. Recognizes both type-1 and type-2 N-degrons, containing positively charged amino acids (Arg, Lys and His) and bulky and hydrophobic amino acids, respectively. Does not ubiquitinate proteins that are acetylated at the N-terminus. In contrast, it strongly binds methylated N-degrons. Plays a critical role in chromatin inactivation and chromosome-wide transcriptional silencing during meiosis via ubiquitination of histone H2A. Binds leucine and is a negative regulator of the leucine-mTOR signaling pathway, thereby controlling cell growth. Required for spermatogenesis, promotes, with Tex19.1, SPO11-dependent recombination foci to accumulate and drive robust homologous chromosome synapsis. Polyubiquitinates LINE-1 retrotransposon encoded, LIRE1, which induces degradation, inhibiting LINE-1 retrotransposon mobilization. Catalyzes ubiquitination and degradation of the N-terminal part of NLRP1B following NLRP1B activation by pathogens and other damage-associated signals: ubiquitination promotes degradation of the N-terminal part and subsequent release of the cleaved C-terminal part of NLRP1B, which polymerizes and forms the NLRP1B inflammasome followed by host cell pyroptosis. Plays a role in T-cell receptor signaling by inducing 'Lys-63'-linked ubiquitination of lymphocyte cell-specific kinase LCK. This activity is regulated by DUSP22, which induces 'Lys-48'-linked ubiquitination of UBR2, leading to its proteasomal degradation by SCF E3 ubiquitin-protein ligase complex. In Mus musculus (Mouse), this protein is E3 ubiquitin-protein ligase UBR2.